A 483-amino-acid polypeptide reads, in one-letter code: MEIVNVLLFLIILFLVKDFVKKNKKIHTKSPSGPIAFPILGNVVQIRFWELFKIQEHELIGNYSKKYNGVVRAWIGERLFLFVSNYDVVKYFQKDENFLYRPSLLVPGWRYASSNGLGVMSSSDDEWKRAKSSVSQSLRVHTSKKLMEEKAIEFIDSLEKISNNNEIFYPKGHIQGYACSMLFKYMFNQDLSVESGMSRTIGNAVEHVFGNLSKLTAFDCFEIFSPLYDWFFTRRLKGCDIVRQIISSQNENHLKSIDPSKPRDLMDDLLIEYGLNEITKEDTMQINQICFDIFGPAVGTVTITMNWVILQLCNRPELQEIAYQEIKKAVKDDEYVNLNHKQNAPYIVAFIKETMRLCSNGFGLPRTAKNDQICGDFFIPKDAIIFINYLEISQNEEIFKNAKEFNPTRYLDESLPVPNIHFGVGQRACPGRFVAIDKMFLGISNLLLKYKLKSQNGEKIDDTIHFSVSLKAKDYGIKLEKRI.

Residues 1–21 traverse the membrane as a helical segment; sequence MEIVNVLLFLIILFLVKDFVK. Residue Cys429 coordinates heme.

It belongs to the cytochrome P450 family. Requires heme as cofactor.

The protein localises to the membrane. The polypeptide is Probable cytochrome P450 517A4 (cyp517A4) (Dictyostelium discoideum (Social amoeba)).